The primary structure comprises 174 residues: MNINKPLEILGHVSWLWASSPLHRNWPVSLFAINVLPAIRANQYVLLTRDNYPVAYCSWANLSLENEIKYLNDVTSLVAEDWTSGDRKWFIDWIAPFGDNGALYKYMRKKFPDELFLAIRVDPKTHVGKVSEFHGGKIDKHLANKIFKQYHHELITEVKNKTDFQFFINRLRGN.

Active-site residues include histidine 23 and aspartate 92. Histidine 151 serves as a coordination point for heme.

Belongs to the RTX toxin acyltransferase family. As to quaternary structure, monomer. In terms of processing, proteolytically cleaved by the protease systems ClpAP, ClpXP and FtsH, leading to its degradation.

It is found in the cytoplasm. It carries out the reaction tetradecanoyl-[ACP] + L-lysyl-[protein] = N(6)-tetradecanoyl-L-lysyl-[protein] + holo-[ACP] + H(+). With respect to regulation, the acyltransferase activity is inhibited by heme. Its function is as follows. Protein-lysine myristoyltransferase that catalyzes myristoylation of the protoxin (HlyA) at two internal lysine residues, thereby converting it to the active toxin. This chain is Protein-lysine myristoyltransferase HlyC, found in Escherichia coli.